Consider the following 301-residue polypeptide: Putative S-adenosyl-L-methionine-dependent methyltransferase Mflv_5024 (301 aa).

Residues D129 and 158-159 (DL) each bind S-adenosyl-L-methionine.

Belongs to the UPF0677 family.

In terms of biological role, exhibits S-adenosyl-L-methionine-dependent methyltransferase activity. This is Putative S-adenosyl-L-methionine-dependent methyltransferase Mflv_5024 from Mycolicibacterium gilvum (strain PYR-GCK) (Mycobacterium gilvum (strain PYR-GCK)).